We begin with the raw amino-acid sequence, 488 residues long: Protein nucleotidyltransferase YdiU (488 aa).

Residues Gly91, Gly93, Arg94, Lys114, Asp126, Gly127, Arg177, and Arg184 each coordinate ATP. The active-site Proton acceptor is the Asp253. Mg(2+) is bound by residues Asn254 and Asp263. Position 263 (Asp263) interacts with ATP.

This sequence belongs to the SELO family. The cofactor is Mg(2+). Mn(2+) serves as cofactor.

It catalyses the reaction L-seryl-[protein] + ATP = 3-O-(5'-adenylyl)-L-seryl-[protein] + diphosphate. It carries out the reaction L-threonyl-[protein] + ATP = 3-O-(5'-adenylyl)-L-threonyl-[protein] + diphosphate. The catalysed reaction is L-tyrosyl-[protein] + ATP = O-(5'-adenylyl)-L-tyrosyl-[protein] + diphosphate. The enzyme catalyses L-histidyl-[protein] + UTP = N(tele)-(5'-uridylyl)-L-histidyl-[protein] + diphosphate. It catalyses the reaction L-seryl-[protein] + UTP = O-(5'-uridylyl)-L-seryl-[protein] + diphosphate. It carries out the reaction L-tyrosyl-[protein] + UTP = O-(5'-uridylyl)-L-tyrosyl-[protein] + diphosphate. In terms of biological role, nucleotidyltransferase involved in the post-translational modification of proteins. It can catalyze the addition of adenosine monophosphate (AMP) or uridine monophosphate (UMP) to a protein, resulting in modifications known as AMPylation and UMPylation. The sequence is that of Protein nucleotidyltransferase YdiU from Bacillus mycoides (strain KBAB4) (Bacillus weihenstephanensis).